A 353-amino-acid polypeptide reads, in one-letter code: Heat-inducible transcription repressor HrcA (353 aa).

The protein belongs to the HrcA family.

In terms of biological role, negative regulator of class I heat shock genes (grpE-dnaK-dnaJ and groELS operons). Prevents heat-shock induction of these operons. The sequence is that of Heat-inducible transcription repressor HrcA from Anaeromyxobacter dehalogenans (strain 2CP-1 / ATCC BAA-258).